A 265-amino-acid chain; its full sequence is 2-amino-3,7-dideoxy-D-threo-hept-6-ulosonate synthase (265 aa).

D25 (proton acceptor) is an active-site residue. 1-deoxy-D-threo-hexo-2,5-diulose 6-phosphate-binding positions include 25-29 (DHGIT) and 144-146 (YAR). The Proton donor role is filled by Y144. K174 acts as the Schiff-base intermediate with substrate in catalysis. Residues 199 to 200 (GG) and 226 to 227 (GR) contribute to the 1-deoxy-D-threo-hexo-2,5-diulose 6-phosphate site.

Belongs to the DeoC/FbaB aldolase family. ADHS subfamily. Homodecamer.

It carries out the reaction 1-deoxy-D-threo-hexo-2,5-diulose 6-phosphate + L-aspartate 4-semialdehyde = 2,3-dioxopropyl phosphate + 2-amino-2,3,7-trideoxy-D-lyxo-hept-6-ulosonate. In terms of biological role, catalyzes a transaldol reaction between 6-deoxy-5-ketofructose 1-phosphate (DKFP) and L-aspartate semialdehyde (ASA) with an elimination of hydroxypyruvaldehyde phosphate to yield 2-amino-3,7-dideoxy-D-threo-hept-6-ulosonate (ADH). Plays a key role in an alternative pathway of the biosynthesis of 3-dehydroquinate (DHQ), which is involved in the canonical pathway for the biosynthesis of aromatic amino acids. This Halobacterium salinarum (strain ATCC 700922 / JCM 11081 / NRC-1) (Halobacterium halobium) protein is 2-amino-3,7-dideoxy-D-threo-hept-6-ulosonate synthase.